A 491-amino-acid polypeptide reads, in one-letter code: MNTSLRRVAVAIMVLIVLLLANATVTQVFAADGLRADPRNQRVLLDEYSRQRGQITAGGQLLAYSVSTDGRFRYLRVYPNPQAYAPVTGFYSLGYSSTGLERAEDAVLNGSDERLFGRRLADFFTGRDPRGGNVDTTIKPQVQQAAWDAMQNGCDGPCRGSVVALEPSTGKILAMVSAPSYDPNLLATHDLAAQADAWEKLRDDPQSPLLNRAISETYPPGSTFKVITTAAALQAGARPQTQLTSAPRTPLPDSTATLENFGGAPCGPGPTVSLQEAFAKSCNTAFVELGLSTGTDKLKAMAQAFGLDTPPPAIPLQVAESTTGPIVDAAALGMSSIGQRDVALTPLQNAQVAATIANDGIAMRPYLVESLKGPDLATISTTTPEQERRAVSPQVAATLTDLMVAAEQVTQQKGAIAGVQIASKTGTAEHGTDPRNTPPHAWYIAFAPAQDPKVAVAVLVEDGGDRLSATGGALAAPIGRATIAAALREGS.

Residues 1–8 (MNTSLRRV) lie on the Cytoplasmic side of the membrane. A helical; Signal-anchor for type II membrane protein transmembrane segment spans residues 9–29 (AVAIMVLIVLLLANATVTQVF). The Periplasmic segment spans residues 30-491 (AADGLRADPR…TIAAALREGS (462 aa)). The interval 160–484 (GSVVALEPST…AAPIGRATIA (325 aa)) is transpeptidase. The Acyl-ester intermediate role is filled by Ser-222.

Belongs to the transpeptidase family.

It is found in the cell inner membrane. The enzyme catalyses Preferential cleavage: (Ac)2-L-Lys-D-Ala-|-D-Ala. Also transpeptidation of peptidyl-alanyl moieties that are N-acyl substituents of D-alanine.. It functions in the pathway cell wall biogenesis; peptidoglycan biosynthesis. In terms of biological role, transpeptidase that catalyzes cross-linking of the peptidoglycan cell wall. Required for the regulation of cell length. The sequence is that of Peptidoglycan D,D-transpeptidase PbpA (pbpA) from Mycolicibacterium smegmatis (strain ATCC 700084 / mc(2)155) (Mycobacterium smegmatis).